The sequence spans 402 residues: Multidrug resistance protein MdtH (402 aa).

11 helical membrane passes run 13–33 (YFLL…FPLI), 34–54 (SIRF…ALGL), 99–116 (PWVL…GTLF), 139–159 (ILMM…SWLL), 165–185 (LVCS…AWYL), 214–234 (VLTL…LPIM), 243–263 (AAVK…LYPI), 277–297 (LMAG…TSSL), 300–320 (LFTL…ARET), 340–360 (LGLA…FDAG), and 369–389 (PWLM…WQFS).

The protein belongs to the major facilitator superfamily. DHA1 family. MdtH (TC 2.A.1.2.21) subfamily.

It is found in the cell inner membrane. This chain is Multidrug resistance protein MdtH, found in Klebsiella pneumoniae subsp. pneumoniae (strain ATCC 700721 / MGH 78578).